Reading from the N-terminus, the 312-residue chain is Olfactory receptor 51B5 (312 aa).

Topologically, residues 1–23 (MSSSGSSHPFLLTGFPGLEEAHH) are extracellular. Residues 24–44 (WISVFFLFMYISILFGNGTLL) form a helical membrane-spanning segment. Over 45–52 (LLIKEDHN) the chain is Cytoplasmic. Residues 53–73 (LHEPMYFFLAMLAATDLGLAL) form a helical membrane-spanning segment. The Extracellular segment spans residues 74–97 (TTMPTVLGVLWLDHREIGSAACFS). Cysteine 95 and cysteine 187 are joined by a disulfide. Residues 98–118 (QAYFIHSLSFLESGILLAMAY) traverse the membrane as a helical segment. The Cytoplasmic segment spans residues 119–137 (DRFIAICNPLRYTSVLTNT). Residues 138-158 (RVVKIGLGVLMRGFVSVVPPI) form a helical membrane-spanning segment. The Extracellular segment spans residues 159–194 (RPLYFFLYCHSHVLSHAFCLHQDVIKLACADTTFNR). Residues 195–215 (LYPAVLVVFIFVLDYLIIFIS) form a helical membrane-spanning segment. The Cytoplasmic portion of the chain corresponds to 216-235 (YVLILKTVLSIASREERAKA). The chain crosses the membrane as a helical span at residues 236-256 (LITCVSHICCVLVFYVTVIGL). Residues 257–271 (SLIHRFGKQVPHIVH) lie on the Extracellular side of the membrane. Residues 272-292 (LIMSYAYFLFPPLMNPITYSV) form a helical membrane-spanning segment. Residues 293–312 (KTKQIQNAILHLFTTHRIGT) are Cytoplasmic-facing.

This sequence belongs to the G-protein coupled receptor 1 family.

Its subcellular location is the cell membrane. Functionally, odorant receptor. This is Olfactory receptor 51B5 (OR51B5) from Homo sapiens (Human).